The following is a 472-amino-acid chain: FAD-dependent monooxygenase ltmM (472 aa).

A helical transmembrane segment spans residues 7–27 (VIIVGGSVAGLSLAHCLEKIG). The FAD site is built by Glu34, Gly48, and Arg107. N-linked (GlcNAc...) asparagine glycosylation is present at Asn186. FAD is bound by residues Asp306 and Ala319. The helical transmembrane segment at 450 to 470 (IVYALYLVAAAAFILYCLSSL) threads the bilayer.

Belongs to the paxM FAD-dependent monooxygenase family. It depends on FAD as a cofactor.

The protein resides in the membrane. It functions in the pathway secondary metabolite biosynthesis. FAD-dependent monooxygenase; part of the gene cluster that mediates the biosynthesis of lolitrems, indole-diterpene mycotoxins that are potent tremorgens in mammals, and are synthesized by clavicipitaceous fungal endophytes in association with their grass hosts. The geranylgeranyl diphosphate (GGPP) synthase ltmG is proposed to catalyze the first step in lolitrem biosynthesis. LtmG catalyzes a series of iterative condensations of isopentenyl diphosphate (IPP) with dimethylallyl diphosphate (DMAPP), geranyl diphosphate (GPP), and farnesyl diphosphate (FPP), to form GGPP. GGPP then condenses with indole-3-glycerol phosphate to form 3-geranylgeranylindole, an acyclic intermediate, to be incorporated into paxilline. Either ltmG or ltmC could be responsible for this step, as both are putative prenyl transferases. The FAD-dependent monooxygenase ltmM then catalyzes the epoxidation of the two terminal alkenes of the geranylgeranyl moiety, which is subsequently cyclized by ltmC, to paspaline. The cytochrome P450 monooxygenases ltmQ and ltmP can sequentially oxidize paspaline to terpendole E and terpendole F. Alternatively, ltmP converts paspaline to an intermediate which is oxidized by ltmQ to terpendole F. LtmF, ltmK, ltmE and ltmJ appear to be unique to the epichloe endophytes. The prenyltransferase ltmF is involved in the 27-hydroxyl-O-prenylation. The cytochrome P450 monooxygenase ltmK is required for the oxidative acetal ring formation. The multi-functional prenyltransferase ltmE is required for C20- and C21-prenylations of the indole ring of paspalanes and acts together with the cytochrome P450 monooxygenase ltmJ to yield lolitremanes by multiple oxidations and ring closures. The stereoisomer pairs of lolitriol and lolitrem N or lolitrem B and lolitrem F may be attributed to variations in the way in which ring closure can occur under the action of ltmJ. While the major product of this pathway is lolitrem B, the prenyl transferases and cytochrome P450 monooxygenases identified in this pathway have a remarkable versatility in their regio- and stereo-specificities to generate a diverse range of metabolites that are products of a metabolic grid rather than a linear pathway. The protein is FAD-dependent monooxygenase ltmM (ltmM) of Epichloe festucae (strain Fl1).